A 223-amino-acid chain; its full sequence is MPTALPDHFFHRDAQVLARDLLGKVIRHKAGDLWLAARIIETEAYYCAEKGSHASLGYTEKRKALFLDGGHIYMYYARGGDSLNFSAEGPGNAVLIKSAFAWTDATSDENALAQMQLNNPDASGAMRPAQRLCAGQTLLCKALGLKVPVWDAKRFDPQKLLVEDVGQTPERIIQTTRLGIPAGRDEHLMYRFVDAGYARFCTRNPLRRGQVEGRDYLFLDQGN.

It belongs to the DNA glycosylase MPG family.

This chain is Putative 3-methyladenine DNA glycosylase, found in Pseudomonas syringae pv. syringae (strain B728a).